We begin with the raw amino-acid sequence, 130 residues long: Profilin-12 (130 aa).

Residues Cys-13 and Cys-115 are joined by a disulfide bond. The short motif at 81 to 97 is the Involved in PIP2 interaction element; sequence AVIRGKKGSGGITVKKT. Thr-111 is modified (phosphothreonine).

This sequence belongs to the profilin family. Occurs in many kinds of cells as a complex with monomeric actin in a 1:1 ratio. Phosphorylated by MAP kinases.

The protein localises to the cytoplasm. It localises to the cytoskeleton. Functionally, binds to actin and affects the structure of the cytoskeleton. At high concentrations, profilin prevents the polymerization of actin, whereas it enhances it at low concentrations. The protein is Profilin-12 of Zea mays (Maize).